A 256-amino-acid polypeptide reads, in one-letter code: C-8 sterol isomerase (256 aa).

Residues 1-31 are disordered; it reads MPPKKQSSSGGNKPSGSGSSSGRSSSGSSCR. Residues 7–30 show a composition bias toward low complexity; sequence SSSGGNKPSGSGSSSGRSSSGSSC. A helical membrane pass occupies residues 40–60; it reads IGGWLKFFAILFALVAPIAYV.

Belongs to the ERG2 family.

The protein resides in the endoplasmic reticulum membrane. It participates in steroid metabolism; ergosterol biosynthesis; ergosterol from zymosterol: step 2/5. Functionally, catalyzes the reaction which results in unsaturation at C-7 in the B ring of sterols. The chain is C-8 sterol isomerase (erg-1) from Neurospora crassa (strain ATCC 24698 / 74-OR23-1A / CBS 708.71 / DSM 1257 / FGSC 987).